Reading from the N-terminus, the 217-residue chain is ATP-dependent Clp protease proteolytic subunit (217 aa).

S119 acts as the Nucleophile in catalysis. H144 is a catalytic residue.

Belongs to the peptidase S14 family. In terms of assembly, fourteen ClpP subunits assemble into 2 heptameric rings which stack back to back to give a disk-like structure with a central cavity, resembling the structure of eukaryotic proteasomes.

The protein resides in the cytoplasm. It carries out the reaction Hydrolysis of proteins to small peptides in the presence of ATP and magnesium. alpha-casein is the usual test substrate. In the absence of ATP, only oligopeptides shorter than five residues are hydrolyzed (such as succinyl-Leu-Tyr-|-NHMec, and Leu-Tyr-Leu-|-Tyr-Trp, in which cleavage of the -Tyr-|-Leu- and -Tyr-|-Trp bonds also occurs).. Functionally, cleaves peptides in various proteins in a process that requires ATP hydrolysis. Has a chymotrypsin-like activity. Plays a major role in the degradation of misfolded proteins. The chain is ATP-dependent Clp protease proteolytic subunit from Bordetella bronchiseptica (strain ATCC BAA-588 / NCTC 13252 / RB50) (Alcaligenes bronchisepticus).